The primary structure comprises 310 residues: Beta-ketoacyl-[acyl-carrier-protein] synthase III (310 aa).

Residues Cys-116 and His-239 contribute to the active site. The interval 240–244 is ACP-binding; sequence QANYR. Asn-269 is a catalytic residue.

Belongs to the thiolase-like superfamily. FabH family. Homodimer.

The protein resides in the cytoplasm. The enzyme catalyses malonyl-[ACP] + acetyl-CoA + H(+) = 3-oxobutanoyl-[ACP] + CO2 + CoA. Its pathway is lipid metabolism; fatty acid biosynthesis. Functionally, catalyzes the condensation reaction of fatty acid synthesis by the addition to an acyl acceptor of two carbons from malonyl-ACP. Catalyzes the first condensation reaction which initiates fatty acid synthesis and may therefore play a role in governing the total rate of fatty acid production. Possesses both acetoacetyl-ACP synthase and acetyl transacylase activities. Its substrate specificity determines the biosynthesis of branched-chain and/or straight-chain of fatty acids. The protein is Beta-ketoacyl-[acyl-carrier-protein] synthase III of Acholeplasma laidlawii (strain PG-8A).